The following is a 152-amino-acid chain: Large ribosomal subunit protein bL9 (152 aa).

This sequence belongs to the bacterial ribosomal protein bL9 family.

Binds to the 23S rRNA. The protein is Large ribosomal subunit protein bL9 of Coxiella burnetii (strain Dugway 5J108-111).